The primary structure comprises 905 residues: Protein translocase subunit SecA (905 aa).

Residues Q89, 107–111 (GEGKT), and D502 contribute to the ATP site. Residues 837–885 (EQTDVGDPILNDQNKKNSSTLWTPSQENKFVNPKDRNPSDSTTWGKVGR) form a disordered region. A compositionally biased stretch (polar residues) spans 852-865 (KNSSTLWTPSQENK). Zn(2+) contacts are provided by C889, C891, C900, and H901.

This sequence belongs to the SecA family. Monomer and homodimer. Part of the essential Sec protein translocation apparatus which comprises SecA, SecYEG and auxiliary proteins SecDF-YajC and YidC. Zn(2+) is required as a cofactor.

It is found in the cell inner membrane. It localises to the cytoplasm. It catalyses the reaction ATP + H2O + cellular proteinSide 1 = ADP + phosphate + cellular proteinSide 2.. In terms of biological role, part of the Sec protein translocase complex. Interacts with the SecYEG preprotein conducting channel. Has a central role in coupling the hydrolysis of ATP to the transfer of proteins into and across the cell membrane, serving both as a receptor for the preprotein-SecB complex and as an ATP-driven molecular motor driving the stepwise translocation of polypeptide chains across the membrane. The sequence is that of Protein translocase subunit SecA from Bartonella henselae (strain ATCC 49882 / DSM 28221 / CCUG 30454 / Houston 1) (Rochalimaea henselae).